The chain runs to 270 residues: Ribitol operon repressor (270 aa).

The 61-residue stretch at 1–61 (MKKITIYDLA…INRQASMLRS (61 aa)) folds into the HTH lacI-type domain. Residues 6–25 (IYDLAELSGVSASAVSAILN) constitute a DNA-binding region (H-T-H motif).

Repressor for the genes of the ribitol operon. Binds D-ribulose as an inducer. In Klebsiella aerogenes (Enterobacter aerogenes), this protein is Ribitol operon repressor (rbtR).